Here is an 829-residue protein sequence, read N- to C-terminus: MTDNQEIKPKKLTLGNSKLSLNKSFDSLTGAQSFVNAKSKTLVEVRKSSTGSTTTLSLNKERNSLDQTAIDANKEEFNRRLSILKKAAEQSKLNDPSQISTLSKLASINQSANSKIETLETEVEQKQQNAEEEKVEASAKTVQNNEDIQPQTSKKKEETFVKSPLVGMRTRYGIESEKELDKTVDNKVVAPKIKLEEPKKFKKADLFNMLGDDESGSGRTRSLASIKRAREKEKRKLVSQAPEKVYREVTIPEVIGVGDLANAMSERVADVIKELMKLGILANASQTIDADTAELVATNLGHTVKRVQESDVENVLISDDKVEDLRTRAPVVTVMGHVDHGKTSLLDALKSTDIAASETGGITQHIGAYRVTIADDRAITFIDTPGHEAFSEMRSRGAKVTDIVIIVVAADDGIKTQTVEAINHAKAAGVPIIVAINKIDKPDIDIERVKNELYVHEIIGEEAGGDVMVIPISALKKINLDKLEEAILLIAEMQDLKASPFGSAAGVVIESKIEKGRGTLTTILVQRGTLRNGDIIIAGSSYGKVKKMTNDKGLEIVEATPSVPVEIQGLNEVPFAGDKFNVVQNEKQAKDIAEYRMRLAKEKKISIAPRSSLEDLFLKASGNSKIKELPLIIKGDVQGSVEAISGSLLKLPSDEIKLRILHSGVGPITESDVSLAHASSAIIVGFNVRAGANALTAAEKEKVDIRYYSIIYNLIDDVKAIMSGMLDPIVREQYIGSVEIRQIFNITKVGKIAGSYVTKGIIKKGAGVRLLRDNVVIHEGKLKTLKRFKDEVKEVREGYECGIAFENYEDIREGDTVEVFELVQEQRQL.

The span at 128–137 shows a compositional bias: basic and acidic residues; that stretch reads QNAEEEKVEA. The tract at residues 128–157 is disordered; that stretch reads QNAEEEKVEASAKTVQNNEDIQPQTSKKKE. Positions 140 to 152 are enriched in polar residues; sequence KTVQNNEDIQPQT. One can recognise a tr-type G domain in the interval 327 to 497; the sequence is TRAPVVTVMG…LLIAEMQDLK (171 aa). The interval 336 to 343 is G1; sequence GHVDHGKT. 336–343 is a binding site for GTP; it reads GHVDHGKT. Positions 361 to 365 are G2; that stretch reads GITQH. The G3 stretch occupies residues 383 to 386; it reads DTPG. GTP-binding positions include 383–387 and 437–440; these read DTPGH and NKID. The segment at 437–440 is G4; the sequence is NKID. A G5 region spans residues 473–475; sequence SAL.

Belongs to the TRAFAC class translation factor GTPase superfamily. Classic translation factor GTPase family. IF-2 subfamily.

Its subcellular location is the cytoplasm. Functionally, one of the essential components for the initiation of protein synthesis. Protects formylmethionyl-tRNA from spontaneous hydrolysis and promotes its binding to the 30S ribosomal subunits. Also involved in the hydrolysis of GTP during the formation of the 70S ribosomal complex. The sequence is that of Translation initiation factor IF-2 from Rickettsia felis (strain ATCC VR-1525 / URRWXCal2) (Rickettsia azadi).